The primary structure comprises 346 residues: Probable long-chain-alcohol O-fatty-acyltransferase 6 (346 aa).

The next 8 helical transmembrane spans lie at 7 to 27 (LFIQ…YLTP), 36 to 56 (LLSV…FSTV), 59 to 79 (SFTI…LFAL), 116 to 136 (FPKW…LQAY), 146 to 166 (FLLG…LTLI), 228 to 248 (FFAI…LYFY), 255 to 275 (TWEV…EVAL), and 289 to 309 (PAVS…WLFS).

It belongs to the wax synthase family.

Its subcellular location is the membrane. It carries out the reaction a long chain fatty alcohol + a fatty acyl-CoA = a wax ester + CoA. In terms of biological role, catalyzes the final step in the synthesis of long-chain linear esters (waxes). The polypeptide is Probable long-chain-alcohol O-fatty-acyltransferase 6 (AT6) (Arabidopsis thaliana (Mouse-ear cress)).